A 134-amino-acid polypeptide reads, in one-letter code: Putative membrane protein insertion efficiency factor (134 aa).

The protein belongs to the UPF0161 family.

The protein resides in the cell inner membrane. Its function is as follows. Could be involved in insertion of integral membrane proteins into the membrane. This Rhizobium etli (strain ATCC 51251 / DSM 11541 / JCM 21823 / NBRC 15573 / CFN 42) protein is Putative membrane protein insertion efficiency factor.